Reading from the N-terminus, the 103-residue chain is Putative membrane protein insertion efficiency factor (103 aa).

Belongs to the UPF0161 family.

It localises to the cell inner membrane. Its function is as follows. Could be involved in insertion of integral membrane proteins into the membrane. This Chlamydia pneumoniae (Chlamydophila pneumoniae) protein is Putative membrane protein insertion efficiency factor.